The following is a 471-amino-acid chain: Glutamate--tRNA ligase (471 aa).

Residues 9-19 carry the 'HIGH' region motif; it reads PSPTGYLHVGG. Zn(2+) contacts are provided by Cys98, Cys100, Cys125, and Asp127. A 'KMSKS' region motif is present at residues 237-241; the sequence is KLSKR. An ATP-binding site is contributed by Lys240.

The protein belongs to the class-I aminoacyl-tRNA synthetase family. Glutamate--tRNA ligase type 1 subfamily. In terms of assembly, monomer. Zn(2+) serves as cofactor.

It localises to the cytoplasm. It catalyses the reaction tRNA(Glu) + L-glutamate + ATP = L-glutamyl-tRNA(Glu) + AMP + diphosphate. Catalyzes the attachment of glutamate to tRNA(Glu) in a two-step reaction: glutamate is first activated by ATP to form Glu-AMP and then transferred to the acceptor end of tRNA(Glu). The chain is Glutamate--tRNA ligase from Yersinia enterocolitica serotype O:8 / biotype 1B (strain NCTC 13174 / 8081).